Here is a 299-residue protein sequence, read N- to C-terminus: Protoheme IX farnesyltransferase (299 aa).

The next 9 membrane-spanning stretches (helical) occupy residues 25–45, 47–67, 95–115, 119–139, 147–167, 173–193, 218–238, 243–263, and 279–299; these read VVLLMLITSLVGMFLATRAGV, WTVLLFGNLGIGLCAGAAAAV, AAAIAFALLLATAGMGLLLLF, LAAWLTLASLLGYAVIYTGFL, IVIGGLAGAAPPLLGWVAVTG, PLLLVLIIFAWTPPHFWALAI, VHILLYTLVMFAVTLLPYAIH, LYLVCALLLGARFLHWAWVLY, and IWYLFLLFIALLADHYLLLNI.

This sequence belongs to the UbiA prenyltransferase family. Protoheme IX farnesyltransferase subfamily.

It is found in the cell inner membrane. The catalysed reaction is heme b + (2E,6E)-farnesyl diphosphate + H2O = Fe(II)-heme o + diphosphate. The protein operates within porphyrin-containing compound metabolism; heme O biosynthesis; heme O from protoheme: step 1/1. Converts heme B (protoheme IX) to heme O by substitution of the vinyl group on carbon 2 of heme B porphyrin ring with a hydroxyethyl farnesyl side group. The chain is Protoheme IX farnesyltransferase from Ectopseudomonas mendocina (strain ymp) (Pseudomonas mendocina).